A 2135-amino-acid chain; its full sequence is Nonribosomal peptide synthetase gliP (2135 aa).

Positions threonine 34–arginine 424 are adenylation 1. Residues threonine 519–alanine 594 form the Carrier 1 domain. An O-(pantetheine 4'-phosphoryl)serine modification is found at serine 555. The tract at residues alanine 663–isoleucine 913 is condensation 1. The adenylation 2 stretch occupies residues tyrosine 1078–alanine 1458. A Carrier 2 domain is found at alanine 1544–arginine 1622. Serine 1582 is subject to O-(pantetheine 4'-phosphoryl)serine. The tract at residues serine 1642–lysine 1905 is condensation 2. The Carrier 3 domain maps to arginine 2061–valine 2134. Position 2095 is an O-(pantetheine 4'-phosphoryl)serine (serine 2095).

This sequence belongs to the NRP synthetase family.

It functions in the pathway mycotoxin biosynthesis. Its function is as follows. Nonribosomal peptide synthetase; part of the gene cluster that mediates the biosynthesis of gliotoxin, a member of the epipolythiodioxopiperazine (ETP) class of toxins characterized by a disulfide-bridged cyclic dipeptide. The first step in gliotoxin biosynthesis is the condensation of serine and phenylalanine to form the cyclo-L-phenylalanyl-L-serine diketopiperazine (DKP) by the NRPS gliP. GliP is also able to produce the DKP cyclo-L-tryptophanyl-L-serine, suggesting that the substrate specificity of the first adenylation (A) domain in gliP is sufficiently relaxed to accommodate both L-Phe and L-Trp. The cytochrome P450 monooxygenase gliC has been shown to catalyze the subsequent hydroxylation of the alpha-carbon of L-Phe in cyclo-L-phenylalanyl-L-serine whereas the second cytochrome P450 enzyme, gliF, is presumably involved in the modification of the DKP side chain. The glutathione S-transferase (GST) gliG then forms a bis-glutathionylated biosynthetic intermediate which is responsible for the sulfurization of gliotoxin. This bis-glutathionylated intermediate is subsequently processed by the gamma-glutamyl cyclotransferase gliK to remove both gamma-glutamyl moieties. Subsequent processing via gliI yields a biosynthetic intermediate, which is N-methylated via the N-methyltransferase gliN, before the gliotoxin oxidoreductase gliT-mediated disulfide bridge closure. GliN-mediated amide methylation confers stability to ETP, damping the spontaneous formation of tri- and tetrasulfides. Intracellular dithiol gliotoxin oxidized by gliT is subsequently effluxed by gliA. Gliotoxin contributes to pathogenesis during invasive aspergillosis. In macrophages and neutrophils, gliotoxin showed inhibition of various different cell functions including cytokine production, antigen presentation, phagocytosis, and production of reactive oxygen species. This is Nonribosomal peptide synthetase gliP from Aspergillus fumigatus (strain ATCC MYA-4609 / CBS 101355 / FGSC A1100 / Af293) (Neosartorya fumigata).